The primary structure comprises 580 residues: G1/S-specific cyclin CLN3 (580 aa).

Residues 454 to 469 (FTPTSSSSSPSPFNSP) show a composition bias toward low complexity. Disordered stretches follow at residues 454-498 (FTPT…QNSF) and 546-580 (MATA…KKTR). 2 stretches are compositionally biased toward polar residues: residues 470 to 480 (YKTSSSMTTPD) and 563 to 580 (TSSV…KKTR).

Belongs to the cyclin family.

Essential for the control of the cell cycle at the G1/S (start) transition. CLN3 may be an upstream activator of the G1 cyclins which directly catalyze start. This Saccharomyces cerevisiae (strain ATCC 204508 / S288c) (Baker's yeast) protein is G1/S-specific cyclin CLN3 (CLN3).